We begin with the raw amino-acid sequence, 662 residues long: Probable protein phosphatase 2C 4 (662 aa).

Phosphoserine is present on serine 153. The PPM-type phosphatase domain occupies aspartate 249–leucine 653. Mn(2+) contacts are provided by aspartate 286, glycine 287, aspartate 581, and aspartate 644.

It belongs to the PP2C family. The cofactor is Mg(2+). Mn(2+) serves as cofactor. As to expression, expressed in seedlings, roots, leaves, stems, young inflorescences, flowers and siliques.

Its subcellular location is the nucleus. It carries out the reaction O-phospho-L-seryl-[protein] + H2O = L-seryl-[protein] + phosphate. It catalyses the reaction O-phospho-L-threonyl-[protein] + H2O = L-threonyl-[protein] + phosphate. In terms of biological role, involved in leaf development regulation. The polypeptide is Probable protein phosphatase 2C 4 (PLL5) (Arabidopsis thaliana (Mouse-ear cress)).